An 862-amino-acid chain; its full sequence is Probable glutaminase ARB_05535/05536 (862 aa).

Residues 1-19 form the signal peptide; it reads MLSWVLLAWAVACSALAGA. Residues Asn-106, Asn-273, Asn-436, Asn-448, Asn-486, Asn-610, and Asn-744 are each glycosylated (N-linked (GlcNAc...) asparagine). The disordered stretch occupies residues 798-862; that stretch reads FLDDKDNNSP…SQMTIVNEND (65 aa). Residues 853–862 show a composition bias toward polar residues; the sequence is SQMTIVNEND.

It belongs to the fungal glutaminase gtaA family.

The protein resides in the secreted. It carries out the reaction L-glutamine + H2O = L-glutamate + NH4(+). In terms of biological role, glutaminase catalyzes the hydrolysis of glutamine to glutamic acid and plays a key role in nitrogen metabolism. This chain is Probable glutaminase ARB_05535/05536, found in Arthroderma benhamiae (strain ATCC MYA-4681 / CBS 112371) (Trichophyton mentagrophytes).